Here is a 637-residue protein sequence, read N- to C-terminus: Keratin, type II cytoskeletal 1 (637 aa).

Positions 1–187 (MSLQCSSRSL…DPQIQKVKSQ (187 aa)) are head. Residue arginine 12 is modified to Omega-N-methylarginine. Phosphoserine is present on residues serine 21 and serine 24. Arginine 49 is modified (omega-N-methylarginine). Serine 67 bears the Phosphoserine mark. Positions 180–328 (QIQKVKSQER…DIDFFSALYQ (149 aa)) form a coiled coil. The segment at 188-223 (EREQIKSLNDKFASFIDKVRFLEQQNQVLQTKWELL) is coil 1A. An IF rod domain is found at 188–501 (EREQIKSLND…KLLEGEEIRM (314 aa)). The segment at 224–243 (QQVDTTTRTQNLDPFFENYI) is linker 1. Positions 244-334 (SILRRKVDSL…ALYQMEMSQM (91 aa)) are coil 1B. Lysine 284 carries the post-translational modification N6,N6-dimethyllysine. The interval 335–358 (QTQISETNVVLSMDNNRSLDLDGI) is linker 12. At serine 352 the chain carries Phosphoserine. The coil 2 stretch occupies residues 359-497 (ISEVKAQYDS…ATYKKLLEGE (139 aa)). The stretch at 397–483 (DSVRNTKMEI…QELMNTKLAL (87 aa)) forms a coiled coil. The segment at 498–637 (EIRMSGECTP…VSTSYSRGTK (140 aa)) is tail. Disordered stretches follow at residues 505–533 (CTPN…SGGG) and 563–637 (YGGG…RGTK). A compositionally biased stretch (low complexity) spans 509–524 (VSVSVSTSHTSMSGSS). An omega-N-methylarginine mark is found at arginine 526, arginine 585, and arginine 607. Positions 563-618 (YGGGSGGGSYGGGSGGGSSGSHRGGSGGGGGSSGGSYGGSSGGGRGGSSSGGGGVK) are enriched in gly residues. A compositionally biased stretch (polar residues) spans 624–637 (TVKFVSTSYSRGTK).

Belongs to the intermediate filament family. In terms of assembly, heterotetramer of two type I and two type II keratins. Heterodimer with KRT10. Two heterodimers of KRT1 and KRT10 form a heterotetramer. Forms a heterodimer with KRT14; the interaction is more abundant in the absence of KRT5. Interacts with PLEC isoform 1C, when in a heterodimer with KRT10. Interacts with ITGB1 in the presence of RACK1 and SRC, and with RACK1. Interacts with C1QBP; the association represents a cell surface kininogen receptor. Interacts with EPPK1; interaction is dependent of higher-order structure of intermediate filament. Undergoes deimination of some arginine residues (citrullination). As to expression, expressed in the infundibular regions of the ear, the interfollicular epidermis of the back, in the interscale regions containing hair follicles in the tail, and in the soles of the footpads (at protein level).

It localises to the cell membrane. The protein resides in the cytoplasm. May regulate the activity of kinases such as PKC and SRC via binding to integrin beta-1 (ITB1) and the receptor of activated protein C kinase 1 (RACK1). In complex with C1QBP is a high affinity receptor for kininogen-1/HMWK. The sequence is that of Keratin, type II cytoskeletal 1 (Krt1) from Mus musculus (Mouse).